A 490-amino-acid chain; its full sequence is Protein U94 (490 aa).

A PV NS1-Nuc domain is found at 1–210 (MFSIINPSDD…SHFNKKPNVK (210 aa)).

The protein resides in the host nucleus. The polypeptide is Protein U94 (U94) (Human herpesvirus 6A (strain Uganda-1102) (HHV-6 variant A)).